Reading from the N-terminus, the 247-residue chain is UDP-2,3-diacylglucosamine hydrolase (247 aa).

Asp-8, His-10, Asp-41, Asn-79, and His-114 together coordinate Mn(2+). 79 to 80 is a binding site for substrate; that stretch reads NR. Residues Asp-122, Ser-160, Asp-171, Asn-174, and His-202 each contribute to the substrate site. Mn(2+) is bound by residues His-202 and His-204.

This sequence belongs to the LpxH family. Mn(2+) serves as cofactor.

It is found in the cell inner membrane. The enzyme catalyses UDP-2-N,3-O-bis[(3R)-3-hydroxytetradecanoyl]-alpha-D-glucosamine + H2O = 2-N,3-O-bis[(3R)-3-hydroxytetradecanoyl]-alpha-D-glucosaminyl 1-phosphate + UMP + 2 H(+). Its pathway is glycolipid biosynthesis; lipid IV(A) biosynthesis; lipid IV(A) from (3R)-3-hydroxytetradecanoyl-[acyl-carrier-protein] and UDP-N-acetyl-alpha-D-glucosamine: step 4/6. Hydrolyzes the pyrophosphate bond of UDP-2,3-diacylglucosamine to yield 2,3-diacylglucosamine 1-phosphate (lipid X) and UMP by catalyzing the attack of water at the alpha-P atom. Involved in the biosynthesis of lipid A, a phosphorylated glycolipid that anchors the lipopolysaccharide to the outer membrane of the cell. The polypeptide is UDP-2,3-diacylglucosamine hydrolase (Xanthomonas oryzae pv. oryzae (strain MAFF 311018)).